Consider the following 577-residue polypeptide: Urease subunit alpha (577 aa).

One can recognise a Urease domain in the interval 136–577 (GTVDCHVHLI…LPMTQRYFLF (442 aa)). Histidine 141, histidine 143, and lysine 224 together coordinate Ni(2+). An N6-carboxylysine modification is found at lysine 224. Residue histidine 226 coordinates substrate. Ni(2+) contacts are provided by histidine 253 and histidine 279. The active-site Proton donor is the histidine 327. Position 367 (aspartate 367) interacts with Ni(2+).

It belongs to the metallo-dependent hydrolases superfamily. Urease alpha subunit family. In terms of assembly, heterotrimer of UreA (gamma), UreB (beta) and UreC (alpha) subunits. Three heterotrimers associate to form the active enzyme. The cofactor is Ni cation. In terms of processing, carboxylation allows a single lysine to coordinate two nickel ions.

The protein resides in the cytoplasm. The catalysed reaction is urea + 2 H2O + H(+) = hydrogencarbonate + 2 NH4(+). It participates in nitrogen metabolism; urea degradation; CO(2) and NH(3) from urea (urease route): step 1/1. This chain is Urease subunit alpha, found in Mycobacterium bovis (strain ATCC BAA-935 / AF2122/97).